The following is a 39-amino-acid chain: Neuropeptide F (39 aa).

F39 is subject to Phenylalanine amide.

This sequence belongs to the NPY family. In terms of tissue distribution, neuronal somata and fibers.

Its subcellular location is the secreted. Its function is as follows. May have an important physiological role in neuroregulation. The protein is Neuropeptide F of Cornu aspersum (Brown garden snail).